The chain runs to 607 residues: Probable Ufm1-specific protease 2 (607 aa).

Active-site residues include Cys440, Asp564, and His566.

Belongs to the peptidase C78 family.

Functionally, thiol protease which recognizes and hydrolyzes the peptide bond at the C-terminal Gly of UFM1, a ubiquitin-like modifier protein bound to a number of target proteins. Does not hydrolyze SUMO1 or ISG15 ubiquitin-like proteins. In Drosophila melanogaster (Fruit fly), this protein is Probable Ufm1-specific protease 2.